The primary structure comprises 576 residues: WAP, Kazal, immunoglobulin, Kunitz and NTR domain-containing protein 2 (576 aa).

The signal sequence occupies residues 1 to 34 (MWAPRCRRFWSRWEQVAALLLLLLLLGVPPRSLA). The WAP domain maps to 39-92 (RYSHAGICPNDMNPNLWVDAQSTCRRECETDQECETYEKCCPNVCGTKSCVAAR). Intrachain disulfides connect Cys-46-Cys-79, Cys-62-Cys-83, Cys-66-Cys-78, Cys-72-Cys-88, Cys-134-Cys-164, Cys-138-Cys-157, Cys-146-Cys-175, and Cys-231-Cys-287. The Kazal-like domain occupies 126-177 (WDGQPVCKCKDRCEKEPSFTCASDGLTYYNRCYMDAEACSKGITLAVVTCRY). The region spanning 210–303 (PALLNNPVHQ…GVLRADFPLS (94 aa)) is the Ig-like C2-type domain. Residue Asn-319 is glycosylated (N-linked (GlcNAc...) asparagine). Cystine bridges form between Cys-328–Cys-378, Cys-337–Cys-361, Cys-353–Cys-374, Cys-386–Cys-436, Cys-395–Cys-419, Cys-411–Cys-432, Cys-445–Cys-515, Cys-448–Cys-517, and Cys-459–Cys-566. 2 consecutive BPTI/Kunitz inhibitor domains span residues 328–378 (CLKP…MLAC) and 386–436 (CSLP…EESC). The 122-residue stretch at 445-566 (CRACKPRQKL…LREVMHKKTC (122 aa)) folds into the NTR domain. N-linked (GlcNAc...) asparagine glycosylation occurs at Asn-519.

It belongs to the WFIKKN family. In terms of assembly, interacts with both mature and propeptide myostatin/MSTN. Primarily expressed in ovary, testis and brain, but not in liver. In fetal tissues, it is primarily expressed in brain, skeletal muscle, thymus and kidney.

The protein resides in the secreted. Functionally, protease-inhibitor that contains multiple distinct protease inhibitor domains. Probably has serine protease- and metalloprotease-inhibitor activity. Inhibits the biological activity of mature myostatin, but not activin. This chain is WAP, Kazal, immunoglobulin, Kunitz and NTR domain-containing protein 2 (WFIKKN2), found in Homo sapiens (Human).